Consider the following 241-residue polypeptide: Acetoacetyl-CoA reductase (241 aa).

NADP(+) contacts are provided by residues 12 to 14 (RGI), arginine 39, and 82 to 86 (NAGIT). Substrate contacts are provided by residues aspartate 88 and 141 to 144 (QMGQ). Tyrosine 147 (proton acceptor) is an active-site residue. 177 to 180 (PGYI) lines the NADP(+) pocket. A substrate-binding site is contributed by 178 to 179 (GY).

This sequence belongs to the short-chain dehydrogenases/reductases (SDR) family.

The protein resides in the cytoplasm. It carries out the reaction a (3R)-3-hydroxyacyl-CoA + NADP(+) = a 3-oxoacyl-CoA + NADPH + H(+). The protein operates within biopolymer metabolism; poly-(R)-3-hydroxybutanoate biosynthesis. This is Acetoacetyl-CoA reductase from Rhizobium meliloti (strain 1021) (Ensifer meliloti).